Reading from the N-terminus, the 138-residue chain is Aspartate 1-decarboxylase (138 aa).

The active-site Schiff-base intermediate with substrate; via pyruvic acid is the serine 25. Serine 25 is subject to Pyruvic acid (Ser). Threonine 57 contacts substrate. The active-site Proton donor is the tyrosine 58. 73 to 75 (GAA) contributes to the substrate binding site. The tract at residues 116–138 (ELGGDPAQVPDGSGLKNPRHPEA) is disordered.

It belongs to the PanD family. Heterooctamer of four alpha and four beta subunits. It depends on pyruvate as a cofactor. Is synthesized initially as an inactive proenzyme, which is activated by self-cleavage at a specific serine bond to produce a beta-subunit with a hydroxyl group at its C-terminus and an alpha-subunit with a pyruvoyl group at its N-terminus.

Its subcellular location is the cytoplasm. The enzyme catalyses L-aspartate + H(+) = beta-alanine + CO2. It functions in the pathway cofactor biosynthesis; (R)-pantothenate biosynthesis; beta-alanine from L-aspartate: step 1/1. Catalyzes the pyruvoyl-dependent decarboxylation of aspartate to produce beta-alanine. The sequence is that of Aspartate 1-decarboxylase from Corynebacterium jeikeium (strain K411).